A 518-amino-acid polypeptide reads, in one-letter code: ORC1-type DNA replication protein 7 (518 aa).

Residue threonine 94–alanine 98 coordinates ATP. The interval aspartate 165–phenylalanine 196 is disordered. Over residues serine 186–phenylalanine 196 the composition is skewed to low complexity. The ATP site is built by tyrosine 318 and arginine 330.

Belongs to the CDC6/cdc18 family.

Its function is as follows. Involved in regulation of DNA replication. Required to initiate DNA replication of the circular chromosome at a nearby autonomously replicating sequence (ARS) oriC1. In Halobacterium salinarum (strain ATCC 700922 / JCM 11081 / NRC-1) (Halobacterium halobium), this protein is ORC1-type DNA replication protein 7 (orc7).